The chain runs to 198 residues: Imidazole glycerol phosphate synthase subunit HisH (198 aa).

One can recognise a Glutamine amidotransferase type-1 domain in the interval 1–194; it reads MIAIIDYGLG…LKGGFQDDQT (194 aa). Cys-77 (nucleophile) is an active-site residue. Residues His-169 and Glu-171 contribute to the active site.

As to quaternary structure, heterodimer of HisH and HisF.

The protein resides in the cytoplasm. It catalyses the reaction 5-[(5-phospho-1-deoxy-D-ribulos-1-ylimino)methylamino]-1-(5-phospho-beta-D-ribosyl)imidazole-4-carboxamide + L-glutamine = D-erythro-1-(imidazol-4-yl)glycerol 3-phosphate + 5-amino-1-(5-phospho-beta-D-ribosyl)imidazole-4-carboxamide + L-glutamate + H(+). It carries out the reaction L-glutamine + H2O = L-glutamate + NH4(+). Its pathway is amino-acid biosynthesis; L-histidine biosynthesis; L-histidine from 5-phospho-alpha-D-ribose 1-diphosphate: step 5/9. Its function is as follows. IGPS catalyzes the conversion of PRFAR and glutamine to IGP, AICAR and glutamate. The HisH subunit catalyzes the hydrolysis of glutamine to glutamate and ammonia as part of the synthesis of IGP and AICAR. The resulting ammonia molecule is channeled to the active site of HisF. In Staphylococcus saprophyticus subsp. saprophyticus (strain ATCC 15305 / DSM 20229 / NCIMB 8711 / NCTC 7292 / S-41), this protein is Imidazole glycerol phosphate synthase subunit HisH.